The chain runs to 135 residues: Large ribosomal subunit protein uL16c (135 aa).

The tract at residues 1-20 (MLSPKRTRFRKQHRGRMKGK) is disordered.

Belongs to the universal ribosomal protein uL16 family. In terms of assembly, part of the 50S ribosomal subunit.

It localises to the plastid. Its subcellular location is the chloroplast. This Landoltia punctata (Dotted duckmeat) protein is Large ribosomal subunit protein uL16c.